Here is a 542-residue protein sequence, read N- to C-terminus: MAVKEVRFTSDARDRMLRGVDIMANAVRVTLGPKGRNVVIDKSFGAPRITKDGVSVAKEIELEDKFENMGAQMLREVASRTSDIAGDGTTTATVLAQAIVREGAKAVAAGMNPMDLKRGIDLAVEAIVRELRTNARKVSKNAEIAQVATISANGDAEIGRYLAEAMEKVGNEGVITVEEAKTAEIELEVVEGMQFDRGYLSPYFITNQEKMRVELEDAYILLHEKKLSNLQAMIPILESVIQSGKPLLIIAEDVEGEALATLVVNKLRGGLKIAAVKAPGFGDRRKSMLEDIAILTGGTVISEELGTKLESATIDILGRAKRVMVEKETTTIVDGAGSKADIGGRVAQIKAQIEDTTSDYDREKLQERLAKLAGGVAVIRVGGSTEIEVKEKKDRVDDALHATRAAVEEGILPGGGVALLRVVSVLNGLATANDDQRVGIEIVRRAIEAPVRQIAENAGAEGSIIVGKLREKEDFAFGWNAQTGEFGDLFQMGVIDPAKVVRAALQDAASVAGLLVTTEAMIAEKPKKDGQPQMPPAPGMDF.

ATP contacts are provided by residues 30-33, lysine 51, 87-91, glycine 415, and aspartate 496; these read TLGP and DGTTT. Residues 523–542 are disordered; it reads AEKPKKDGQPQMPPAPGMDF. A compositionally biased stretch (pro residues) spans 533 to 542; it reads QMPPAPGMDF.

This sequence belongs to the chaperonin (HSP60) family. Forms a cylinder of 14 subunits composed of two heptameric rings stacked back-to-back. Interacts with the co-chaperonin GroES.

Its subcellular location is the cytoplasm. It carries out the reaction ATP + H2O + a folded polypeptide = ADP + phosphate + an unfolded polypeptide.. Its function is as follows. Together with its co-chaperonin GroES, plays an essential role in assisting protein folding. The GroEL-GroES system forms a nano-cage that allows encapsulation of the non-native substrate proteins and provides a physical environment optimized to promote and accelerate protein folding. In Sinorhizobium medicae (strain WSM419) (Ensifer medicae), this protein is Chaperonin GroEL 2.